A 463-amino-acid chain; its full sequence is Bifunctional protein HldE (463 aa).

The ribokinase stretch occupies residues 1 to 315 (MKKILVIGDL…LILNQTHPKI (315 aa)). An ATP-binding site is contributed by 191-194 (NRAE). The active site involves D260. Residues 334 to 463 (FTNGCFDLLH…IEKIKRTHND (130 aa)) form a cytidylyltransferase region.

In the N-terminal section; belongs to the carbohydrate kinase PfkB family. The protein in the C-terminal section; belongs to the cytidylyltransferase family. In terms of assembly, homodimer.

It catalyses the reaction D-glycero-beta-D-manno-heptose 7-phosphate + ATP = D-glycero-beta-D-manno-heptose 1,7-bisphosphate + ADP + H(+). It carries out the reaction D-glycero-beta-D-manno-heptose 1-phosphate + ATP + H(+) = ADP-D-glycero-beta-D-manno-heptose + diphosphate. Its pathway is nucleotide-sugar biosynthesis; ADP-L-glycero-beta-D-manno-heptose biosynthesis; ADP-L-glycero-beta-D-manno-heptose from D-glycero-beta-D-manno-heptose 7-phosphate: step 1/4. It participates in nucleotide-sugar biosynthesis; ADP-L-glycero-beta-D-manno-heptose biosynthesis; ADP-L-glycero-beta-D-manno-heptose from D-glycero-beta-D-manno-heptose 7-phosphate: step 3/4. Functionally, catalyzes the phosphorylation of D-glycero-D-manno-heptose 7-phosphate at the C-1 position to selectively form D-glycero-beta-D-manno-heptose-1,7-bisphosphate. In terms of biological role, catalyzes the ADP transfer from ATP to D-glycero-beta-D-manno-heptose 1-phosphate, yielding ADP-D-glycero-beta-D-manno-heptose. The sequence is that of Bifunctional protein HldE from Helicobacter pylori (strain HPAG1).